Here is a 425-residue protein sequence, read N- to C-terminus: Proteinase-activated receptor 1 (425 aa).

Residues 1–21 form the signal peptide; that stretch reads MGPRRLLLVAACLCLCGPLLS. A propeptide spans 22–41 (removed for receptor activation); that stretch reads ARTRARRPASKATNATLDPR. N-linked (GlcNAc...) asparagine glycosylation is found at N35, N62, and N75. Residues 42–102 lie on the Extracellular side of the membrane; the sequence is SFLLRNPNDK…SGYLTSSWLT (61 aa). The helical transmembrane segment at 103 to 128 threads the bilayer; that stretch reads LFVPSVYTGVFVVSLPVNIMAIVVFI. The Cytoplasmic portion of the chain corresponds to 129–137; that stretch reads LKMKVKKPA. The helical transmembrane segment at 138–157 threads the bilayer; it reads VVYMLHLATADVLFVSVLPF. Residues 158-176 lie on the Extracellular side of the membrane; it reads KISYYLSGSDWQFGSELCR. Residues C175 and C254 are joined by a disulfide bond. Residues 177 to 198 traverse the membrane as a helical segment; sequence FVTAAFYCNMYASILLMTVISI. Residues 199–218 are Cytoplasmic-facing; that stretch reads DRFLAVVYPMQSLSWRTLGR. The chain crosses the membrane as a helical span at residues 219-239; sequence ASFTCLAIWALAIAGVVPLLL. At 240–268 the chain is on the extracellular side; that stretch reads KEQTIQVPGLNITTCHDVLNETLLEGYYA. Residues N250 and N259 are each glycosylated (N-linked (GlcNAc...) asparagine). A helical transmembrane segment spans residues 269 to 288; sequence YYFSAFSAVFFFVPLIISTV. Over 289–311 the chain is Cytoplasmic; that stretch reads CYVSIIRCLSSSTVANRSKKSRA. The chain crosses the membrane as a helical span at residues 312–334; sequence LFLSAAVFCIFIICFGPTNILLI. Topologically, residues 335 to 350 are extracellular; it reads AHYSFLSHTSTTEAAY. A helical membrane pass occupies residues 351–374; that stretch reads FAYLLCVCVSSISCCIDPLIYYYA. Over 375 to 425 the chain is Cytoplasmic; it reads SSECQRYVYSILCCKESSDPSSSNSSGQLMASKMDTCSSNLNNSIYKKLLT. S418 carries the post-translational modification Phosphoserine.

The protein belongs to the G-protein coupled receptor 1 family. In terms of processing, proteolytic cleavage by thrombin generates a new N-terminus that functions as a tethered ligand. Also proteolytically cleaved by cathepsin CTSG. Cleavage at 41-Arg-|-Ser-42 by CTSG results in receptor activation while cleavage at 55-Phe-|-Trp-56 results in inhibition of receptor activation. Phosphorylated in the C-terminal tail; probably mediating desensitization prior to the uncoupling and internalization of the receptor.

Its subcellular location is the cell membrane. High affinity receptor that binds the activated thrombin, leading to calcium release from intracellular stores. The thrombin-activated receptor signaling pathway is mediated through PTX-insensitive G proteins, activation of phospholipase C resulting in the production of 1D-myo-inositol 1,4,5-trisphosphate (InsP3) which binds to InsP3 receptors causing calcium release from the stores. In astrocytes, the calcium released into the cytosol allows the Ca(2+)-dependent release of L-glutamate into the synaptic cleft through BEST1, that targets the neuronal postsynaptic GRIN2A/NMDAR receptor resulting in the synaptic plasticity regulation. May play a role in platelets activation and in vascular development. Mediates up-regulation of pro-inflammatory cytokines, such as MCP-1/CCL2 and IL6, triggered by coagulation factor Xa (F10) in cardiac fibroblasts and umbilical vein endothelial cells. The chain is Proteinase-activated receptor 1 from Papio hamadryas (Hamadryas baboon).